The primary structure comprises 119 residues: Large ribosomal subunit protein bL20 (119 aa).

Belongs to the bacterial ribosomal protein bL20 family.

Its function is as follows. Binds directly to 23S ribosomal RNA and is necessary for the in vitro assembly process of the 50S ribosomal subunit. It is not involved in the protein synthesizing functions of that subunit. This is Large ribosomal subunit protein bL20 from Streptococcus agalactiae serotype Ia (strain ATCC 27591 / A909 / CDC SS700).